The sequence spans 503 residues: Cobyric acid synthase (503 aa).

Positions 245–447 (DISIAIIRLP…LHGIFDEISL (203 aa)) constitute a GATase cobBQ-type domain. Cysteine 326 serves as the catalytic Nucleophile. Residue histidine 439 is part of the active site.

It belongs to the CobB/CobQ family. CobQ subfamily.

Its pathway is cofactor biosynthesis; adenosylcobalamin biosynthesis. Functionally, catalyzes amidations at positions B, D, E, and G on adenosylcobyrinic A,C-diamide. NH(2) groups are provided by glutamine, and one molecule of ATP is hydrogenolyzed for each amidation. The polypeptide is Cobyric acid synthase (Alkaliphilus metalliredigens (strain QYMF)).